We begin with the raw amino-acid sequence, 311 residues long: Geranylgeranyl transferase type-2 subunit beta (311 aa).

PFTB repeat units lie at residues 54 to 95 (KERI…AMLD), 102 to 143 (KDKV…AILG), 150 to 191 (KNTA…KILN), 197 to 239 (DEEL…AIIG), and 246 to 288 (RNQL…SLLQ). Residues 176–178 (HGA) and 218–230 (RPEK…YGWW) contribute to the geranylgeranyl diphosphate site. 3 residues coordinate Zn(2+): Asp224, Cys226, and His276.

It belongs to the protein prenyltransferase subunit beta family. As to quaternary structure, heterodimer of an alpha and a beta subunit. The cofactor is Zn(2+).

The enzyme catalyses geranylgeranyl diphosphate + L-cysteinyl-[protein] = S-geranylgeranyl-L-cysteinyl-[protein] + diphosphate. Functionally, catalyzes the transfer of a geranyl-geranyl moiety from geranyl-geranyl pyrophosphate to proteins having the C-terminal -XCC or -XCXC, where both cysteines may become modified. This Schizosaccharomyces pombe (strain 972 / ATCC 24843) (Fission yeast) protein is Geranylgeranyl transferase type-2 subunit beta (ptb1).